Here is a 677-residue protein sequence, read N- to C-terminus: Methionine--tRNA ligase (677 aa).

Positions 15-25 (PYANGSIHLGH) match the 'HIGH' region motif. Positions 146, 149, 159, and 162 each coordinate Zn(2+). The 'KMSKS' region signature appears at 333–337 (KMSKS). Position 336 (Lys-336) interacts with ATP. A tRNA-binding domain is found at 575–677 (DFAKVDLRVA…AGAKPGHQVK (103 aa)).

The protein belongs to the class-I aminoacyl-tRNA synthetase family. MetG type 1 subfamily. As to quaternary structure, homodimer. Zn(2+) is required as a cofactor.

The protein resides in the cytoplasm. It catalyses the reaction tRNA(Met) + L-methionine + ATP = L-methionyl-tRNA(Met) + AMP + diphosphate. Is required not only for elongation of protein synthesis but also for the initiation of all mRNA translation through initiator tRNA(fMet) aminoacylation. This chain is Methionine--tRNA ligase, found in Escherichia fergusonii (strain ATCC 35469 / DSM 13698 / CCUG 18766 / IAM 14443 / JCM 21226 / LMG 7866 / NBRC 102419 / NCTC 12128 / CDC 0568-73).